Here is a 760-residue protein sequence, read N- to C-terminus: Catalase-peroxidase (760 aa).

The interval 1–24 (MAESKCPFKSQGSRSNVAGGGTRN) is disordered. Residues 96–242 (WHSAGTYRVF…LAAAHMGLIY (147 aa)) constitute a cross-link (tryptophyl-tyrosyl-methioninium (Trp-Tyr) (with M-268)). Residue H97 is the Proton acceptor of the active site. Positions 242–268 (YVNPEGPDGNPDPVAAAHDIRVTFGRM) form a cross-link, tryptophyl-tyrosyl-methioninium (Tyr-Met) (with W-96). H283 is a heme b binding site.

This sequence belongs to the peroxidase family. Peroxidase/catalase subfamily. As to quaternary structure, homodimer or homotetramer. Heme b is required as a cofactor. Formation of the three residue Trp-Tyr-Met cross-link is important for the catalase, but not the peroxidase activity of the enzyme.

Its subcellular location is the cytoplasm. It catalyses the reaction H2O2 + AH2 = A + 2 H2O. It carries out the reaction 2 H2O2 = O2 + 2 H2O. In terms of biological role, bifunctional enzyme with both catalase and broad-spectrum peroxidase activity. This is Catalase-peroxidase from Aspergillus clavatus (strain ATCC 1007 / CBS 513.65 / DSM 816 / NCTC 3887 / NRRL 1 / QM 1276 / 107).